The following is a 319-amino-acid chain: Acetyl-coenzyme A carboxylase carboxyl transferase subunit alpha (319 aa).

Residues 35-296 (NLDEEVQRLR…KAQLLIDLAE (262 aa)) form the CoA carboxyltransferase C-terminal domain.

This sequence belongs to the AccA family. In terms of assembly, acetyl-CoA carboxylase is a heterohexamer composed of biotin carboxyl carrier protein (AccB), biotin carboxylase (AccC) and two subunits each of ACCase subunit alpha (AccA) and ACCase subunit beta (AccD).

It localises to the cytoplasm. The enzyme catalyses N(6)-carboxybiotinyl-L-lysyl-[protein] + acetyl-CoA = N(6)-biotinyl-L-lysyl-[protein] + malonyl-CoA. Its pathway is lipid metabolism; malonyl-CoA biosynthesis; malonyl-CoA from acetyl-CoA: step 1/1. Component of the acetyl coenzyme A carboxylase (ACC) complex. First, biotin carboxylase catalyzes the carboxylation of biotin on its carrier protein (BCCP) and then the CO(2) group is transferred by the carboxyltransferase to acetyl-CoA to form malonyl-CoA. The protein is Acetyl-coenzyme A carboxylase carboxyl transferase subunit alpha of Photorhabdus laumondii subsp. laumondii (strain DSM 15139 / CIP 105565 / TT01) (Photorhabdus luminescens subsp. laumondii).